The sequence spans 397 residues: MPATEYQRSFGRSFLNLRRDTAVNSVESTTVTPELTQMEAELVSFQRKVAERFIDLNASSCEDLLSLEWVGKLLDSFLSCQEEFRSIVINHRSMITKPPMDRLVSDYFERSVKALDVCNAIRDGVEQIRQWQKLIEIVICAFNNNGGGSSGKRPLGEGQFRRARKTLIELAIGMLDEKDSSSSSVSSQHRNRSFGRNKEQLHHRTIGHFRSLSWSVSRSWSASKQLQAIGNNLATPRASDITATNGLIVPVYTMTTVLLFVMWALVAAIPCQDRGLQVHFNVPRNYQWGGSLMSLHDRIIEESKKRERKNTCGLLKEIHQFEKTSRLMNELVDSVQFPLSEEKEMEVRERVEELGKLQEALKNGLDPFERKVREVFHRIVRSRTEGLDTVGKHHGSE.

Residues 247–267 (LIVPVYTMTTVLLFVMWALVA) form a helical membrane-spanning segment.

It belongs to the ROH1 family. In terms of assembly, interacts with EXO70C2. Mostly expressed in mature pollen.

Its subcellular location is the membrane. The protein resides in the cytoplasm. It is found in the cytosol. Functionally, involved in the regulation of plant growth, and modulates pollen development to ensure male fertility. May also affect the composition of the inner seed coat mucilage layer. The protein is Protein ROH1D of Arabidopsis thaliana (Mouse-ear cress).